We begin with the raw amino-acid sequence, 113 residues long: Tubulin alpha chain (113 aa).

Residue E52 coordinates GTP. Position 52 (E52) interacts with Mg(2+).

The protein belongs to the tubulin family. Dimer of alpha and beta chains. A typical microtubule is a hollow water-filled tube with an outer diameter of 25 nm and an inner diameter of 15 nM. Alpha-beta heterodimers associate head-to-tail to form protofilaments running lengthwise along the microtubule wall with the beta-tubulin subunit facing the microtubule plus end conferring a structural polarity. Microtubules usually have 13 protofilaments but different protofilament numbers can be found in some organisms and specialized cells. Requires Mg(2+) as cofactor.

The protein resides in the cytoplasm. Its subcellular location is the cytoskeleton. The catalysed reaction is GTP + H2O = GDP + phosphate + H(+). Functionally, tubulin is the major constituent of microtubules, a cylinder consisting of laterally associated linear protofilaments composed of alpha- and beta-tubulin heterodimers. Microtubules grow by the addition of GTP-tubulin dimers to the microtubule end, where a stabilizing cap forms. Below the cap, tubulin dimers are in GDP-bound state, owing to GTPase activity of alpha-tubulin. In Picea abies (Norway spruce), this protein is Tubulin alpha chain (TUBA).